A 216-amino-acid polypeptide reads, in one-letter code: Orotate phosphoribosyltransferase (216 aa).

Lysine 30 contacts 5-phospho-alpha-D-ribose 1-diphosphate. 38–39 (FF) contributes to the orotate binding site. 5-phospho-alpha-D-ribose 1-diphosphate-binding positions include 75 to 76 (YK), arginine 102, lysine 103, lysine 106, histidine 108, and 128 to 136 (DDVITAGTA). Orotate contacts are provided by threonine 132 and arginine 160.

The protein belongs to the purine/pyrimidine phosphoribosyltransferase family. PyrE subfamily. Homodimer. Mg(2+) is required as a cofactor.

It catalyses the reaction orotidine 5'-phosphate + diphosphate = orotate + 5-phospho-alpha-D-ribose 1-diphosphate. The protein operates within pyrimidine metabolism; UMP biosynthesis via de novo pathway; UMP from orotate: step 1/2. Catalyzes the transfer of a ribosyl phosphate group from 5-phosphoribose 1-diphosphate to orotate, leading to the formation of orotidine monophosphate (OMP). In Acinetobacter baumannii (strain AB307-0294), this protein is Orotate phosphoribosyltransferase.